We begin with the raw amino-acid sequence, 252 residues long: MFHLITIEDKVRIAPSQFNNEVQTIEDEIEKKYTSKVVLNAGLFVALYDILGTGDSYVHSGDGGAHLMVRFRMVVFKPFKGEVLEGVIKKSSRQSIQISLGFFHEIYLNPIELPNPSNYNQEEGLWYWEWNENQLFFEDGGRVRFKIDQVEFNPEISQPAPSPKNVNTEAMDSYSLREYKEKQIENENLLKQVKSPLILKVSMREAGLGMVSWWTNQSAGDDDENEEDGGENQDDEVAEDDGGEEPTIEEDE.

Residues 214 to 252 (WTNQSAGDDDENEEDGGENQDDEVAEDDGGEEPTIEEDE) are disordered. Positions 220–252 (GDDDENEEDGGENQDDEVAEDDGGEEPTIEEDE) are enriched in acidic residues.

This sequence belongs to the eukaryotic RPB7/RPC8 RNA polymerase subunit family. As to quaternary structure, component of the RNA polymerase III (Pol III) complex consisting of several subunits.

It localises to the nucleus. In terms of biological role, DNA-dependent RNA polymerase catalyzes the transcription of DNA into RNA using the four ribonucleoside triphosphates as substrates. This Dictyostelium discoideum (Social amoeba) protein is DNA-directed RNA polymerase III subunit rpc8 (polr3h-1).